A 95-amino-acid chain; its full sequence is Small ribosomal subunit protein bS6 (95 aa).

The protein belongs to the bacterial ribosomal protein bS6 family.

Binds together with bS18 to 16S ribosomal RNA. The sequence is that of Small ribosomal subunit protein bS6 from Clostridium kluyveri (strain NBRC 12016).